Here is a 95-residue protein sequence, read N- to C-terminus: Small ribosomal subunit protein bS6 (95 aa).

The protein belongs to the bacterial ribosomal protein bS6 family.

Binds together with bS18 to 16S ribosomal RNA. In Clostridium novyi (strain NT), this protein is Small ribosomal subunit protein bS6.